We begin with the raw amino-acid sequence, 135 residues long: Large ribosomal subunit protein uL18 (135 aa).

The disordered stretch occupies residues 1-25; that stretch reads MAQTENQKSKRIPLGKDVSTQRRLS.

The protein belongs to the universal ribosomal protein uL18 family. As to quaternary structure, part of the 50S ribosomal subunit; part of the 5S rRNA/L5/L18/L25 subcomplex. Contacts the 5S and 23S rRNAs.

This is one of the proteins that bind and probably mediate the attachment of the 5S RNA into the large ribosomal subunit, where it forms part of the central protuberance. This chain is Large ribosomal subunit protein uL18, found in Nocardia farcinica (strain IFM 10152).